The chain runs to 189 residues: Flavin prenyltransferase UbiX (189 aa).

FMN-binding positions include 10 to 12 (GAS), S37, 88 to 91 (SIKT), and R123. 2 residues coordinate dimethylallyl phosphate: Y153 and R169.

Belongs to the UbiX/PAD1 family.

The catalysed reaction is dimethylallyl phosphate + FMNH2 = prenylated FMNH2 + phosphate. It functions in the pathway cofactor biosynthesis; ubiquinone biosynthesis. Flavin prenyltransferase that catalyzes the synthesis of the prenylated FMN cofactor (prenyl-FMN) for 4-hydroxy-3-polyprenylbenzoic acid decarboxylase UbiD. The prenyltransferase is metal-independent and links a dimethylallyl moiety from dimethylallyl monophosphate (DMAP) to the flavin N5 and C6 atoms of FMN. The polypeptide is Flavin prenyltransferase UbiX (Escherichia coli O157:H7).